The following is a 196-amino-acid chain: Molybdenum cofactor guanylyltransferase (196 aa).

Residues 10 to 12 (LAG), K23, N51, D69, and D99 contribute to the GTP site. Position 99 (D99) interacts with Mg(2+).

Belongs to the MobA family. Monomer. Mg(2+) serves as cofactor.

It is found in the cytoplasm. The enzyme catalyses Mo-molybdopterin + GTP + H(+) = Mo-molybdopterin guanine dinucleotide + diphosphate. Transfers a GMP moiety from GTP to Mo-molybdopterin (Mo-MPT) cofactor (Moco or molybdenum cofactor) to form Mo-molybdopterin guanine dinucleotide (Mo-MGD) cofactor. The sequence is that of Molybdenum cofactor guanylyltransferase from Shewanella amazonensis (strain ATCC BAA-1098 / SB2B).